The chain runs to 299 residues: Fructose-1,6-bisphosphatase class 1 (299 aa).

Mg(2+) contacts are provided by E79, D98, L100, and D101. Residues 101–104 (DGSS), Y207, and K238 each bind substrate. Residue E244 participates in Mg(2+) binding.

Belongs to the FBPase class 1 family. As to quaternary structure, homotetramer. It depends on Mg(2+) as a cofactor.

Its subcellular location is the cytoplasm. It carries out the reaction beta-D-fructose 1,6-bisphosphate + H2O = beta-D-fructose 6-phosphate + phosphate. It functions in the pathway carbohydrate biosynthesis; gluconeogenesis. The polypeptide is Fructose-1,6-bisphosphatase class 1 (Campylobacter curvus (strain 525.92)).